The following is a 191-amino-acid chain: Aminodeoxychorismate synthase component 2 (191 aa).

One can recognise a Glutamine amidotransferase type-1 domain in the interval 1–191 (MLLLIDNYDS…HQLLDNFLNR (191 aa)). Active-site residues include Cys79, His172, and Glu174.

In terms of assembly, monomer. Heterodimer consisting of two non-identical subunits: a glutamine amidotransferase subunit (PabA) and a aminodeoxychorismate synthase subunit (PabB).

It carries out the reaction chorismate + L-glutamine = 4-amino-4-deoxychorismate + L-glutamate. Its pathway is cofactor biosynthesis; tetrahydrofolate biosynthesis; 4-aminobenzoate from chorismate: step 1/2. Part of a heterodimeric complex that catalyzes the two-step biosynthesis of 4-amino-4-deoxychorismate (ADC), a precursor of p-aminobenzoate (PABA) and tetrahydrofolate. In the first step, a glutamine amidotransferase (PabA) generates ammonia as a substrate that, along with chorismate, is used in the second step, catalyzed by aminodeoxychorismate synthase (PabB) to produce ADC. PabA converts glutamine into glutamate only in the presence of stoichiometric amounts of PabB. The protein is Aminodeoxychorismate synthase component 2 (pabA) of Serratia marcescens.